Here is a 294-residue protein sequence, read N- to C-terminus: GTP cyclohydrolase FolE2 (294 aa).

This sequence belongs to the GTP cyclohydrolase IV family.

The enzyme catalyses GTP + H2O = 7,8-dihydroneopterin 3'-triphosphate + formate + H(+). It functions in the pathway cofactor biosynthesis; 7,8-dihydroneopterin triphosphate biosynthesis; 7,8-dihydroneopterin triphosphate from GTP: step 1/1. In terms of biological role, converts GTP to 7,8-dihydroneopterin triphosphate. In Acinetobacter baylyi (strain ATCC 33305 / BD413 / ADP1), this protein is GTP cyclohydrolase FolE2.